The sequence spans 375 residues: Aminomethyltransferase (375 aa).

Belongs to the GcvT family. As to quaternary structure, the glycine cleavage system is composed of four proteins: P, T, L and H.

It catalyses the reaction N(6)-[(R)-S(8)-aminomethyldihydrolipoyl]-L-lysyl-[protein] + (6S)-5,6,7,8-tetrahydrofolate = N(6)-[(R)-dihydrolipoyl]-L-lysyl-[protein] + (6R)-5,10-methylene-5,6,7,8-tetrahydrofolate + NH4(+). The glycine cleavage system catalyzes the degradation of glycine. The sequence is that of Aminomethyltransferase from Symbiobacterium thermophilum (strain DSM 24528 / JCM 14929 / IAM 14863 / T).